A 413-amino-acid polypeptide reads, in one-letter code: Metacaspase-1A (413 aa).

Residues 1–104 (MQNHHHQQSS…PTDPVAFGHG (104 aa)) form a disordered region. Over residues 36–47 (SPQPGYGAPPPH) the composition is skewed to pro residues. A compositionally biased stretch (low complexity) spans 49 to 58 (GYGQPPSGYG). The span at 75–85 (GMNQYQNTYSH) shows a compositional bias: polar residues. Active-site residues include H204 and C260.

Belongs to the peptidase C14B family.

Its function is as follows. Involved in cell death (apoptosis). Required for the apoptotic-like loss of membrane phospholipid asymmetry at stationary phase and facilitates growth under conditions of endoplasmic reticulum stress. In Aspergillus fumigatus (strain CBS 144.89 / FGSC A1163 / CEA10) (Neosartorya fumigata), this protein is Metacaspase-1A (casA).